The primary structure comprises 254 residues: Chalcone isomerase cfoK (254 aa).

Catalysis depends on residues histidine 33 and tyrosine 50.

The enzyme catalyses a chalcone = a flavanone.. It functions in the pathway secondary metabolite biosynthesis; flavonoid biosynthesis. In terms of biological role, chalcone isomerase; part of the gene cluster that mediates the biosynthesis of chlorflavonin, a fungal flavonoid with acetolactate synthase inhibitory activity. Within the pathway, cfoK acts as chalcone isomerase (CHI), the key enzyme responsible for the tricyclic formation of flavanone through Michael-type intramolecular cyclization of chalcone. The hydrogen at C2'-OH is extracted by the imidazole ring of His-33, which induces the oxa-Michael addition to form the intermediate enolate through 6-endo-trig mode cyclization. The enolate can then be stabilized by a hydrogen bond with the Tyr-50 residue. Following enol tautomerization, the C ring, a gamma-pyranone ring, is formed. The pathway begins with the PKS-NRPS hybrid synthetase cfoA that uses benzoic acid or p-hydroxybenzoic acid as a starter unit with four rounds of chain elongation using malonyl-CoA to form the chalcone skeleton. Then, a new type of chalcone isomerase, cfoK, catalyzes the conversion of the chalcone into a flavanone by a histidine-mediated oxa-Michael addition mechanism. The desaturation of flavanone to flavone is catalyzed by a new type of flavone synthase, the flavin mononucleotide (FMN)-dependent oxidoreductase cfoJ. Monooxygenases cfoF, cfoG, and P450 cfoH are responsible for the hydroxylation of the flavonoid skeleton at sites C3, C8, and C2', respectively. Like cfoF, the dehydratase cfoI plays also a role in the hydroxylation of position C3. Methyltransferases cfoB, cfoC, and cfoD then catalyze the methylation of C7-OH, C8-OH, and C3-OH, respectively. Finally, the monooxygenase cfoE is responsible for the chlorination of flavonoid at position C3'. This Aspergillus candidus protein is Chalcone isomerase cfoK.